The chain runs to 720 residues: Heat shock protein homolog pss1 (720 aa).

The residue at position 38 (Ser38) is a Phosphoserine. A Phosphothreonine modification is found at Thr39. Residues 658–690 are compositionally biased toward basic and acidic residues; sequence KRQKVQAEREAAKAATKSEAEKQKPSGKFEEGT. Residues 658 to 720 are disordered; sequence KRQKVQAERE…ETMEIDEQKE (63 aa). Acidic residues predominate over residues 703–720; that stretch reads VAPENEEVETMEIDEQKE.

This sequence belongs to the heat shock protein 70 family.

The protein resides in the cytoplasm. Required for normal growth at various temperatures. The chain is Heat shock protein homolog pss1 (pss1) from Schizosaccharomyces pombe (strain 972 / ATCC 24843) (Fission yeast).